A 456-amino-acid polypeptide reads, in one-letter code: Arginine biosynthesis bifunctional protein ArgJ, mitochondrial (456 aa).

Substrate contacts are provided by Thr184, Lys213, Thr224, Glu311, Asn451, and Thr456. The active-site Nucleophile is Thr224.

The protein belongs to the ArgJ family. Heterodimer of an alpha and a beta chain. Post-translationally, the alpha and beta chains are autoproteolytically processed from a single precursor protein within the mitochondrion.

It localises to the mitochondrion matrix. It catalyses the reaction N(2)-acetyl-L-ornithine + L-glutamate = N-acetyl-L-glutamate + L-ornithine. It carries out the reaction L-glutamate + acetyl-CoA = N-acetyl-L-glutamate + CoA + H(+). It functions in the pathway amino-acid biosynthesis; L-arginine biosynthesis; L-ornithine and N-acetyl-L-glutamate from L-glutamate and N(2)-acetyl-L-ornithine (cyclic): step 1/1. Its pathway is amino-acid biosynthesis; L-arginine biosynthesis; N(2)-acetyl-L-ornithine from L-glutamate: step 1/4. In terms of biological role, catalyzes two activities which are involved in the cyclic version of arginine biosynthesis: the synthesis of acetylglutamate from glutamate and acetyl-CoA, and of ornithine by transacetylation between acetylornithine and glutamate. The protein is Arginine biosynthesis bifunctional protein ArgJ, mitochondrial of Aspergillus niger (strain ATCC MYA-4892 / CBS 513.88 / FGSC A1513).